Reading from the N-terminus, the 383-residue chain is tRNA-specific 2-thiouridylase MnmA (383 aa).

ATP is bound by residues 9–16 (GMSGGVDS) and M35. Positions 95–97 (NPD) are interaction with target base in tRNA. C100 functions as the Nucleophile in the catalytic mechanism. A disulfide bond links C100 and C198. G124 lines the ATP pocket. Positions 148–150 (KDQ) are interaction with tRNA. Catalysis depends on C198, which acts as the Cysteine persulfide intermediate. The interval 310–311 (RY) is interaction with tRNA.

The protein belongs to the MnmA/TRMU family.

It is found in the cytoplasm. The catalysed reaction is S-sulfanyl-L-cysteinyl-[protein] + uridine(34) in tRNA + AH2 + ATP = 2-thiouridine(34) in tRNA + L-cysteinyl-[protein] + A + AMP + diphosphate + H(+). In terms of biological role, catalyzes the 2-thiolation of uridine at the wobble position (U34) of tRNA, leading to the formation of s(2)U34. The chain is tRNA-specific 2-thiouridylase MnmA from Paraburkholderia phytofirmans (strain DSM 17436 / LMG 22146 / PsJN) (Burkholderia phytofirmans).